Reading from the N-terminus, the 291-residue chain is Protease HtpX homolog (291 aa).

2 helical membrane-spanning segments follow: residues 4–24 and 38–58; these read IALFLITNLAVMAVLGITASL and LGALLGFAMVMGFGGAFISLL. Position 144 (H144) interacts with Zn(2+). Residue E145 is part of the active site. A Zn(2+)-binding site is contributed by H148. Helical transmembrane passes span 159–179 and 197–217; these read LIQGVMNTFVVFLSRAIGYFI and VTTVVLDLLLGLVAAMIVAWF. Residue E222 participates in Zn(2+) binding.

This sequence belongs to the peptidase M48B family. Zn(2+) serves as cofactor.

It localises to the cell inner membrane. This Leptothrix cholodnii (strain ATCC 51168 / LMG 8142 / SP-6) (Leptothrix discophora (strain SP-6)) protein is Protease HtpX homolog.